A 267-amino-acid polypeptide reads, in one-letter code: Phosphate import ATP-binding protein PstB 2 (267 aa).

An ABC transporter domain is found at 21–262; it reads LATKDLHVYY…AQCQSTNDYV (242 aa). Position 53–60 (53–60) interacts with ATP; sequence GPSGCGKS.

It belongs to the ABC transporter superfamily. Phosphate importer (TC 3.A.1.7) family. As to quaternary structure, the complex is composed of two ATP-binding proteins (PstB), two transmembrane proteins (PstC and PstA) and a solute-binding protein (PstS).

It localises to the cell membrane. The catalysed reaction is phosphate(out) + ATP + H2O = ADP + 2 phosphate(in) + H(+). Functionally, part of the ABC transporter complex PstSACB involved in phosphate import. Responsible for energy coupling to the transport system. The chain is Phosphate import ATP-binding protein PstB 2 from Streptococcus pyogenes serotype M1.